Consider the following 366-residue polypeptide: Pyrimidine monooxygenase RutA (366 aa).

Residues 49–50, N115, E124, 140–141, and S190 each bind FMN; these read IK and RY.

This sequence belongs to the NtaA/SnaA/DszA monooxygenase family. RutA subfamily.

It carries out the reaction uracil + FMNH2 + NADH + O2 = (Z)-3-ureidoacrylate + FMN + NAD(+) + H2O + H(+). It catalyses the reaction thymine + FMNH2 + NADH + O2 = (Z)-2-methylureidoacrylate + FMN + NAD(+) + H2O + H(+). In terms of biological role, catalyzes the pyrimidine ring opening between N-3 and C-4 by an unusual flavin hydroperoxide-catalyzed mechanism, adding oxygen atoms in the process to yield ureidoacrylate peracid, that immediately reacts with FMN forming ureidoacrylate and FMN-N(5)-oxide. The FMN-N(5)-oxide reacts spontaneously with NADH to produce FMN. Requires the flavin reductase RutF to regenerate FMN in vivo. The chain is Pyrimidine monooxygenase RutA from Serratia proteamaculans (strain 568).